A 375-amino-acid chain; its full sequence is Trichodiene synthase (375 aa).

It belongs to the trichodiene synthase family.

The enzyme catalyses (2E,6E)-farnesyl diphosphate = trichodiene + diphosphate. It functions in the pathway sesquiterpene biosynthesis; trichothecene biosynthesis. Functionally, TS is a member of the terpene cyclase group of enzymes. It catalyzes the isomerization and cyclization of farnesyl pyro-phosphate to form trichodiene, the first cyclic intermediate in the biosynthetic pathway for trichothecenes. It serves to branch trichothecene biosynthesis from the isoprenoid pathway. This chain is Trichodiene synthase (TRI5), found in Fusarium cerealis (Fusarium crookwellense).